The sequence spans 225 residues: Uracil-DNA glycosylase (225 aa).

Asp-67 functions as the Proton acceptor in the catalytic mechanism.

This sequence belongs to the uracil-DNA glycosylase (UDG) superfamily. UNG family.

It is found in the cytoplasm. It carries out the reaction Hydrolyzes single-stranded DNA or mismatched double-stranded DNA and polynucleotides, releasing free uracil.. Excises uracil residues from the DNA which can arise as a result of misincorporation of dUMP residues by DNA polymerase or due to deamination of cytosine. The polypeptide is Uracil-DNA glycosylase (Coxiella burnetii (strain Dugway 5J108-111)).